Here is a 245-residue protein sequence, read N- to C-terminus: 3-dehydroquinate dehydratase (245 aa).

3-dehydroquinate-binding positions include 35–37 and Arg-70; that span reads EFR. The active-site Proton donor/acceptor is the His-132. Lys-158 functions as the Schiff-base intermediate with substrate in the catalytic mechanism. 3-dehydroquinate-binding residues include Arg-199, Thr-220, and Gln-224.

The protein belongs to the type-I 3-dehydroquinase family. As to quaternary structure, homodimer.

It catalyses the reaction 3-dehydroquinate = 3-dehydroshikimate + H2O. The protein operates within metabolic intermediate biosynthesis; chorismate biosynthesis; chorismate from D-erythrose 4-phosphate and phosphoenolpyruvate: step 3/7. In terms of biological role, involved in the third step of the chorismate pathway, which leads to the biosynthesis of aromatic amino acids. Catalyzes the cis-dehydration of 3-dehydroquinate (DHQ) and introduces the first double bond of the aromatic ring to yield 3-dehydroshikimate. This Haloquadratum walsbyi (strain DSM 16790 / HBSQ001) protein is 3-dehydroquinate dehydratase.